Consider the following 439-residue polypeptide: Histidine--tRNA ligase (439 aa).

It belongs to the class-II aminoacyl-tRNA synthetase family. In terms of assembly, homodimer.

The protein resides in the cytoplasm. The catalysed reaction is tRNA(His) + L-histidine + ATP = L-histidyl-tRNA(His) + AMP + diphosphate + H(+). This is Histidine--tRNA ligase from Clostridium tetani (strain Massachusetts / E88).